The sequence spans 804 residues: Phenylalanine--tRNA ligase beta subunit (804 aa).

Residues 38–148 (RAAFRAFTIA…ENAPVGTSFA (111 aa)) form the tRNA-binding domain. Positions 401–476 (HTARVIDFPV…RIHGINRIDP (76 aa)) constitute a B5 domain. Residues Asp454, Asp460, Glu463, and Glu464 each contribute to the Mg(2+) site. An FDX-ACB domain is found at 710–803 (SLFQSLKRDY…VAKQTGGVLR (94 aa)).

It belongs to the phenylalanyl-tRNA synthetase beta subunit family. Type 1 subfamily. As to quaternary structure, tetramer of two alpha and two beta subunits. Requires Mg(2+) as cofactor.

It is found in the cytoplasm. It catalyses the reaction tRNA(Phe) + L-phenylalanine + ATP = L-phenylalanyl-tRNA(Phe) + AMP + diphosphate + H(+). This is Phenylalanine--tRNA ligase beta subunit from Brucella melitensis biotype 1 (strain ATCC 23456 / CCUG 17765 / NCTC 10094 / 16M).